A 257-amino-acid polypeptide reads, in one-letter code: UPF0246 protein Sbal223_3241 (257 aa).

This sequence belongs to the UPF0246 family.

In Shewanella baltica (strain OS223), this protein is UPF0246 protein Sbal223_3241.